Consider the following 238-residue polypeptide: Orotidine 5'-phosphate decarboxylase (238 aa).

Substrate is bound by residues Asp18, Lys40, 67–76 (DMKLLDIDNT), Thr122, Arg183, Gln192, and Arg213. The active-site Proton donor is Lys69.

The protein belongs to the OMP decarboxylase family. Type 1 subfamily. In terms of assembly, homodimer.

The catalysed reaction is orotidine 5'-phosphate + H(+) = UMP + CO2. It participates in pyrimidine metabolism; UMP biosynthesis via de novo pathway; UMP from orotate: step 2/2. Its function is as follows. Catalyzes the decarboxylation of orotidine 5'-monophosphate (OMP) to uridine 5'-monophosphate (UMP). The chain is Orotidine 5'-phosphate decarboxylase from Brucella abortus (strain S19).